We begin with the raw amino-acid sequence, 607 residues long: SNW/SKI-interacting protein A (607 aa).

5 disordered regions span residues Glu-29–Phe-77, Ala-178–Asn-205, Glu-217–Cys-265, Leu-327–Arg-434, and Lys-516–Arg-607. Over residues Ser-35–Gly-49 the composition is skewed to low complexity. An SNW region spans residues Ser-190–Ala-353. Residues Pro-240–Pro-251 are compositionally biased toward pro residues. 2 coiled-coil regions span residues Ala-313–Glu-349 and Glu-391–Arg-418. Composition is skewed to basic and acidic residues over residues Leu-327–Leu-339, Glu-379–Arg-434, Lys-516–Lys-527, Arg-535–Glu-550, and Glu-562–Glu-571.

The protein belongs to the SNW family. As to quaternary structure, interacts with FLO6/SIP4. Interacts with DIS1. In terms of tissue distribution, widely expressed.

It is found in the nucleus. Functionally, acts as a positive regulator of drought and salt tolerance. Acts as a positive regulator of cell viability. This chain is SNW/SKI-interacting protein A, found in Oryza sativa subsp. japonica (Rice).